Here is a 350-residue protein sequence, read N- to C-terminus: Galactokinase (350 aa).

Residue E15 to D18 coordinates substrate. ATP is bound by residues S47 and G99–S105. Positions 105 and 137 each coordinate Mg(2+). Catalysis depends on D149, which acts as the Proton acceptor. Y198 lines the substrate pocket.

The protein belongs to the GHMP kinase family. GalK subfamily.

The protein resides in the cytoplasm. The catalysed reaction is alpha-D-galactose + ATP = alpha-D-galactose 1-phosphate + ADP + H(+). The protein operates within carbohydrate metabolism; galactose metabolism. In terms of biological role, catalyzes the transfer of the gamma-phosphate of ATP to D-galactose to form alpha-D-galactose-1-phosphate (Gal-1-P). The sequence is that of Galactokinase from Pyrococcus horikoshii (strain ATCC 700860 / DSM 12428 / JCM 9974 / NBRC 100139 / OT-3).